A 218-amino-acid polypeptide reads, in one-letter code: DNA-directed RNA polymerase III subunit RPC7-like (218 aa).

Positions 130 to 218 (TIILPKRPPK…SDDNMDEAIY (89 aa)) are disordered. The segment covering 139–160 (KTTEDKEETIQKLETLEKKEEE) has biased composition (basic and acidic residues). Acidic residues-rich tracts occupy residues 161 to 193 (VTSE…EETD) and 201 to 218 (NGED…EAIY).

It belongs to the eukaryotic RPC7 RNA polymerase subunit family. As to quaternary structure, component of the RNA polymerase III (Pol III) complex consisting of 17 subunits. Pol III exists as two alternative complexes defined by the mutually exclusive incorporation of subunit POLR3G/RPC7alpha or POLR3GL/RPC7beta. Found in a trimeric complex with POLR3C/RPC3 and POLR3F/RPC6. Directly interacts with POLR3C.

It is found in the nucleus. Its function is as follows. DNA-dependent RNA polymerase catalyzes the transcription of DNA into RNA using the four ribonucleoside triphosphates as substrates. Specific peripheric component of RNA polymerase III which synthesizes small RNAs, such as 5S rRNA and tRNAs. This Bos taurus (Bovine) protein is DNA-directed RNA polymerase III subunit RPC7-like (POLR3GL).